The primary structure comprises 145 residues: Large ribosomal subunit protein uL11 (145 aa).

This sequence belongs to the universal ribosomal protein uL11 family. In terms of assembly, part of the ribosomal stalk of the 50S ribosomal subunit. Interacts with L10 and the large rRNA to form the base of the stalk. L10 forms an elongated spine to which L12 dimers bind in a sequential fashion forming a multimeric L10(L12)X complex. One or more lysine residues are methylated.

Its function is as follows. Forms part of the ribosomal stalk which helps the ribosome interact with GTP-bound translation factors. The chain is Large ribosomal subunit protein uL11 from Hydrogenobaculum sp. (strain Y04AAS1).